The primary structure comprises 179 residues: Inorganic pyrophosphatase (179 aa).

Substrate contacts are provided by lysine 30, arginine 44, and tyrosine 56. Residues aspartate 66, aspartate 71, and aspartate 103 each contribute to the Mg(2+) site. Substrate is bound at residue tyrosine 143.

Belongs to the PPase family. In terms of assembly, homohexamer. Mg(2+) is required as a cofactor.

The protein resides in the cytoplasm. It carries out the reaction diphosphate + H2O = 2 phosphate + H(+). Catalyzes the hydrolysis of inorganic pyrophosphate (PPi) forming two phosphate ions. The polypeptide is Inorganic pyrophosphatase (Wigglesworthia glossinidia brevipalpis).